The following is a 209-amino-acid chain: Casparian strip membrane protein 1 (209 aa).

The Cytoplasmic segment spans residues 1-46 (MEKSESTKIDVVETNKERKGKAPLLGKAPVVAAAVVHAKGGGAKRG). A helical transmembrane segment spans residues 47–67 (IAIFDLILRIAAFASALGAAV). Over 68-96 (AMATTEETLPFFTQFFQFEASYDDLPTFT) the chain is Extracellular. A helical transmembrane segment spans residues 97 to 117 (FFVVAMAIVVAYLVLSVPFSI). The Cytoplasmic portion of the chain corresponds to 118–129 (VCIVRPHAVVPR). The helical transmembrane segment at 130 to 150 (LLLIIFDTVIIALTTGAAGSS) threads the bilayer. Residues 151-179 (AAIVYLAHNGNQDANWLAICQQFGDFCQR) are Extracellular-facing. A helical membrane pass occupies residues 180–200 (VSGAVVAAFVTVVILIFLVVL). Residues 201–209 (SASALRRHH) are Cytoplasmic-facing.

Belongs to the Casparian strip membrane proteins (CASP) family. In terms of assembly, homodimer and heterodimers.

The protein localises to the cell membrane. Its function is as follows. Regulates membrane-cell wall junctions and localized cell wall deposition. Required for establishment of the Casparian strip membrane domain (CSD) and the subsequent formation of Casparian strips, a cell wall modification of the root endodermis that determines an apoplastic barrier between the intraorganismal apoplasm and the extraorganismal apoplasm and prevents lateral diffusion. This Nicotiana tabacum (Common tobacco) protein is Casparian strip membrane protein 1.